Here is a 195-residue protein sequence, read N- to C-terminus: MSRKATIERVTKETQIKLSLEIDGTGEAKICTSVPFLDHMLDLFARHGLFNLQVDATGDIDIDFHHTVEDIGIVLGQALKEALGDKKGIRRYGQATVPMDETLASVAVDISGRPYLVYHVSLPKVKIGEFDVELVREFFQAVVNNLGANIHVNVMYGDNVHHIVEACFKAFARAVDQATQVDSRIQGVMSTKGKL.

Belongs to the imidazoleglycerol-phosphate dehydratase family.

It is found in the cytoplasm. The catalysed reaction is D-erythro-1-(imidazol-4-yl)glycerol 3-phosphate = 3-(imidazol-4-yl)-2-oxopropyl phosphate + H2O. It participates in amino-acid biosynthesis; L-histidine biosynthesis; L-histidine from 5-phospho-alpha-D-ribose 1-diphosphate: step 6/9. In Geobacter sulfurreducens (strain ATCC 51573 / DSM 12127 / PCA), this protein is Imidazoleglycerol-phosphate dehydratase.